The sequence spans 592 residues: UvrABC system protein C (592 aa).

Residues 14 to 91 (KKPGCYLWKN…IKKHKPRYNI (78 aa)) enclose the GIY-YIG domain. Residues 197–232 (DQVLKDLKEKESIASEKFDFEQAKKYLDLQKAINLI) form the UVR domain.

It belongs to the UvrC family. Interacts with UvrB in an incision complex.

The protein localises to the cytoplasm. In terms of biological role, the UvrABC repair system catalyzes the recognition and processing of DNA lesions. UvrC both incises the 5' and 3' sides of the lesion. The N-terminal half is responsible for the 3' incision and the C-terminal half is responsible for the 5' incision. The sequence is that of UvrABC system protein C from Mycoplasmoides gallisepticum (strain R(low / passage 15 / clone 2)) (Mycoplasma gallisepticum).